The sequence spans 217 residues: N-(5'-phosphoribosyl)anthranilate isomerase (217 aa).

Belongs to the TrpF family.

The enzyme catalyses N-(5-phospho-beta-D-ribosyl)anthranilate = 1-(2-carboxyphenylamino)-1-deoxy-D-ribulose 5-phosphate. It participates in amino-acid biosynthesis; L-tryptophan biosynthesis; L-tryptophan from chorismate: step 3/5. This Synechococcus sp. (strain ATCC 27144 / PCC 6301 / SAUG 1402/1) (Anacystis nidulans) protein is N-(5'-phosphoribosyl)anthranilate isomerase.